We begin with the raw amino-acid sequence, 569 residues long: Proline--tRNA ligase (569 aa).

It belongs to the class-II aminoacyl-tRNA synthetase family. ProS type 1 subfamily. In terms of assembly, homodimer.

The protein localises to the cytoplasm. The catalysed reaction is tRNA(Pro) + L-proline + ATP = L-prolyl-tRNA(Pro) + AMP + diphosphate. Functionally, catalyzes the attachment of proline to tRNA(Pro) in a two-step reaction: proline is first activated by ATP to form Pro-AMP and then transferred to the acceptor end of tRNA(Pro). As ProRS can inadvertently accommodate and process non-cognate amino acids such as alanine and cysteine, to avoid such errors it has two additional distinct editing activities against alanine. One activity is designated as 'pretransfer' editing and involves the tRNA(Pro)-independent hydrolysis of activated Ala-AMP. The other activity is designated 'posttransfer' editing and involves deacylation of mischarged Ala-tRNA(Pro). The misacylated Cys-tRNA(Pro) is not edited by ProRS. The polypeptide is Proline--tRNA ligase (Campylobacter jejuni subsp. doylei (strain ATCC BAA-1458 / RM4099 / 269.97)).